The following is a 1525-amino-acid chain: MNWIPNVQKRAFHYVLNRLALFSDLELDNMDISLGTAQKAALTNVKLDPDRVSLPAGMYMRSGKIDEVSVEMRLLGGAGIAVKIDGVHITASMKQMDVETATEHVEEFLERTTADLAASILSEDLSASLQIDPAEEPPLLGMGGSGISEALVKKVTQTVLSQLTVDVTNVHVTLFVAADDKMDLVVDEVRLRPQGGQEMALEVRGVKMKVMDKKARGTSAPVTAGSTAHATTGFTSESDSDSDTDPFSNAKKSLLQSTIFSHEEASSIYMSAIAESANLGFESDPLFGVFYVDTIDVLVFLGEEMRVSCEVGIVRASLDLLPTVILSLVKVGNGGSGGKKSRDSETKEGTAMDLNMSIKSISASICQLGDDWEFKNIDTNLLFSLSDISGSSGAFHKLQIGVCEVKRGSTRVFGFESDEKNTDDEEPTPRDSDILLKASSASFTLVLPKKAVGVFTIPDLIDVVSLITYLLSLIESKQQKAATMTERSERAGASKTTVQTNTFDFDVAGHKLYILPIRLSNGQMSLSRVSFGDVHVKGISFENSIVSVDKVDFDIGLPIVEELHQLLLPIIDAMNSAKNRPVPASVQTAPPKLLRIVEEPVNASSLVINVARVKGKVDLGGKVGVIEVVLGGISVTGPTDRIEISTVEIGRDLSDLGLSKKWLLHPLKRESNVVVELSSGQIQLITVKNCALEFYTELLELFGGKGDDTKAAELQESSSPDSSSRESSSGSESPPKRIPLQIHNCAVGLNPTNSSSSAQFIVKHVTCEIKPSPTFSMTSFIGSASLLLIDDASLVTPNPTDLMSSYLEQYTSVASLTATSISISTSPGNPTCININGDTVTLSTCADSTQTLIHLINSLKPAVELSGAKFQLETLDPFLNTFQDVDDCFFKAKNKDACESSCSSDNDDIDMVSDDVPNNMSFVESYYGGDKPSQSRKSGRQKMAESYTHADFLLDSDLDSLVKRERVRFEEICFEEDYFDKEEEDMPVMSRPRASSHDLASSNELLTPPTVVINIDLIHNIVCNFHDGYDWQYTRNEINGAVDGLKKRMKERPVVEEPPVMTTDLLFNSIYIQAKDEDDLDDVVGEQTEPAKPKEANKSRRGLLSRSSNPLVQVWLQGIACLLTVYAGLEDPDLPPGQVLNSLDVKIKDVEIIDHVPTSTWNKFLTYMRSRGEREAGAVMAHITMQNVKPVSTLSSQEVICHVTILPLRLHVDQDTLDFLTRFFNFKDVRTTAPPDETFIQKFDIRDVPVKLDYKPKKVDYSGLKSGKSTELMNFFILDESDMVLRRIKLRGITGFANLGQKLNDIWMPDVRRTQLPGVLAGVAPVRPLVNLGGGIRNLIVVPVREYKKDGRVVRSLNQGAYAFAKTTTNELVRFGAKLAVGTQNLLEGVVSTERAGESRDLDDSDLESTTKYYTYMGYSDSNNKLISLYANQPLGVYAGLQDAYSSFGKHMNVAKTAIHNLSEDISEADTAGAAAYAVVKAAPVALIRPIIGTTEAVSKTLFGVANEMDPSGRELARDKYKEAN.

Disordered regions lie at residues 216 to 247 and 712 to 738; these read RGTSAPVTAGSTAHATTGFTSESDSDSDTDPF and AELQESSSPDSSSRESSSGSESPPKRI. Positions 220–230 are enriched in polar residues; the sequence is APVTAGSTAHA. Residues 716–733 are compositionally biased toward low complexity; the sequence is ESSSPDSSSRESSSGSES.

This sequence belongs to the ATG2 family.

The protein resides in the preautophagosomal structure membrane. It localises to the endoplasmic reticulum membrane. The enzyme catalyses a 1,2-diacyl-sn-glycero-3-phosphocholine(in) = a 1,2-diacyl-sn-glycero-3-phosphocholine(out). The catalysed reaction is a 1,2-diacyl-sn-glycero-3-phospho-L-serine(in) = a 1,2-diacyl-sn-glycero-3-phospho-L-serine(out). It catalyses the reaction a 1,2-diacyl-sn-glycero-3-phosphoethanolamine(in) = a 1,2-diacyl-sn-glycero-3-phosphoethanolamine(out). Lipid transfer protein required for autophagosome completion and peroxisome degradation. Tethers the edge of the isolation membrane (IM) to the endoplasmic reticulum (ER) and mediates direct lipid transfer from ER to IM for IM expansion. ATG2 binds to the ER exit site (ERES), which is the membrane source for autophagosome formation, using basic residues in its N-terminal region (NR) and to the expanding edge of the IM through its C-terminal region. The latter binding is assisted by an ATG18-PtdIns3P interaction. ATG2 then extracts phospholipids from the membrane source using its NR and transfers them to ATG9 to the IM through its predicted beta-sheet-rich structure for membrane expansion. This chain is Autophagy-related protein 2 (ATG2), found in Yarrowia lipolytica (strain CLIB 122 / E 150) (Yeast).